A 110-amino-acid chain; its full sequence is MLEKTMRMNYLYDFYQALLTPKQRNYMALYYLDDYSLGEIAEQYEVSRQAVYDNIRRTEAMLEQYEEKLGLLRKYERRRQIIERLKDYISRRYGADAELAALVRELDELD.

Belongs to the UPF0122 family.

Its function is as follows. Might take part in the signal recognition particle (SRP) pathway. This is inferred from the conservation of its genetic proximity to ftsY/ffh. May be a regulatory protein. This chain is UPF0122 protein GK1195, found in Geobacillus kaustophilus (strain HTA426).